Here is a 911-residue protein sequence, read N- to C-terminus: Protein translocase subunit SecA (911 aa).

ATP is bound by residues Gln-86, 104-108 (GEGKT), and Asp-512. Residues 869 to 888 (ALADDGQPQGAQPVRNVLPK) form a disordered region. Positions 895, 897, 906, and 907 each coordinate Zn(2+).

It belongs to the SecA family. In terms of assembly, monomer and homodimer. Part of the essential Sec protein translocation apparatus which comprises SecA, SecYEG and auxiliary proteins SecDF-YajC and YidC. It depends on Zn(2+) as a cofactor.

The protein resides in the cell inner membrane. It localises to the cytoplasm. It carries out the reaction ATP + H2O + cellular proteinSide 1 = ADP + phosphate + cellular proteinSide 2.. Its function is as follows. Part of the Sec protein translocase complex. Interacts with the SecYEG preprotein conducting channel. Has a central role in coupling the hydrolysis of ATP to the transfer of proteins into and across the cell membrane, serving both as a receptor for the preprotein-SecB complex and as an ATP-driven molecular motor driving the stepwise translocation of polypeptide chains across the membrane. The chain is Protein translocase subunit SecA from Bordetella parapertussis (strain 12822 / ATCC BAA-587 / NCTC 13253).